The following is a 700-amino-acid chain: Acyl-coenzyme A oxidase 2 (700 aa).

Belongs to the acyl-CoA oxidase family. As to quaternary structure, heteropentamer composed of five different subunits. FAD serves as cofactor.

The protein localises to the peroxisome. It catalyses the reaction a 2,3-saturated acyl-CoA + O2 = a (2E)-enoyl-CoA + H2O2. It participates in lipid metabolism; peroxisomal fatty acid beta-oxidation. Functionally, oxidizes strain chain acyl-CoAs with a chain length of 10 to 14 carbons. Also active toward the 2S isomers of acyl-CoA-esters containing a 2-methyl group. The protein is Acyl-coenzyme A oxidase 2 (POX2) of Yarrowia lipolytica (strain CLIB 122 / E 150) (Yeast).